We begin with the raw amino-acid sequence, 278 residues long: 2-dehydro-3-deoxyphosphooctonate aldolase (278 aa).

The protein belongs to the KdsA family.

Its subcellular location is the cytoplasm. It carries out the reaction D-arabinose 5-phosphate + phosphoenolpyruvate + H2O = 3-deoxy-alpha-D-manno-2-octulosonate-8-phosphate + phosphate. It participates in carbohydrate biosynthesis; 3-deoxy-D-manno-octulosonate biosynthesis; 3-deoxy-D-manno-octulosonate from D-ribulose 5-phosphate: step 2/3. It functions in the pathway bacterial outer membrane biogenesis; lipopolysaccharide biosynthesis. This Bartonella tribocorum (strain CIP 105476 / IBS 506) protein is 2-dehydro-3-deoxyphosphooctonate aldolase.